Here is a 192-residue protein sequence, read N- to C-terminus: Peptidyl-tRNA hydrolase (192 aa).

TRNA is bound at residue Y18. H23 acts as the Proton acceptor in catalysis. F69, N71, and N117 together coordinate tRNA.

The protein belongs to the PTH family. As to quaternary structure, monomer.

It localises to the cytoplasm. The enzyme catalyses an N-acyl-L-alpha-aminoacyl-tRNA + H2O = an N-acyl-L-amino acid + a tRNA + H(+). Functionally, hydrolyzes ribosome-free peptidyl-tRNAs (with 1 or more amino acids incorporated), which drop off the ribosome during protein synthesis, or as a result of ribosome stalling. In terms of biological role, catalyzes the release of premature peptidyl moieties from peptidyl-tRNA molecules trapped in stalled 50S ribosomal subunits, and thus maintains levels of free tRNAs and 50S ribosomes. This is Peptidyl-tRNA hydrolase from Neisseria meningitidis serogroup A / serotype 4A (strain DSM 15465 / Z2491).